The primary structure comprises 552 residues: Non-structural protein NS1 (552 aa).

Belongs to the orbivirus non-structural protein NS1 family.

The sequence is that of Non-structural protein NS1 (Segment-5) from Antilocapra americana (Pronghorn).